The primary structure comprises 103 residues: Protein IQ-DOMAIN 20 (103 aa).

The interval 10–22 is calmodulin-binding; the sequence is VVRRKLLRRSQSR. 2 consecutive IQ domains span residues 36 to 62 and 63 to 87; these read EEIAAVKIQAFFRGHLARRAFKALKSL and VKLQAVARGVLVRRQARIALHCMHA.

Belongs to the IQD family. Interacts with calmodulin (CaM and CML) at the plasma membrane in a calcium ion Ca(2+)- independent manner, however, Ca(2+) seems to modulate calmodulin binding. Binds to multiple calmodulin (CaM) in the presence of Ca(2+) and CaM-like proteins.

It localises to the nucleus. Its subcellular location is the nucleolus. The protein localises to the cell membrane. In terms of biological role, may be involved in cooperative interactions with calmodulins or calmodulin-like proteins. Recruits calmodulin proteins to microtubules, thus being a potential scaffold in cellular signaling and trafficking. May associate with nucleic acids and regulate gene expression at the transcriptional or post-transcriptional level. The chain is Protein IQ-DOMAIN 20 from Arabidopsis thaliana (Mouse-ear cress).